We begin with the raw amino-acid sequence, 374 residues long: tRNA (adenine(58)-N(1))-methyltransferase catalytic subunit TRM61 (374 aa).

Residues 120 to 122, glutamate 138, arginine 143, 167 to 168, and aspartate 202 each bind S-adenosyl-L-methionine; these read SGS and DV.

The protein belongs to the class I-like SAM-binding methyltransferase superfamily. TRM61 family. As to quaternary structure, heterotetramer; composed of two copies of TRM6 and two copies of TRM61.

It localises to the nucleus. It carries out the reaction adenosine(58) in tRNA + S-adenosyl-L-methionine = N(1)-methyladenosine(58) in tRNA + S-adenosyl-L-homocysteine + H(+). Functionally, catalytic subunit of tRNA (adenine-N(1)-)-methyltransferase, which catalyzes the formation of N(1)-methyladenine at position 58 (m1A58) in initiator methionyl-tRNA. The sequence is that of tRNA (adenine(58)-N(1))-methyltransferase catalytic subunit TRM61 (TRM61) from Candida glabrata (strain ATCC 2001 / BCRC 20586 / JCM 3761 / NBRC 0622 / NRRL Y-65 / CBS 138) (Yeast).